The sequence spans 340 residues: Protein jhp_1168 (340 aa).

Seems to interact with H.pylori HolB.

Could be the functional equivalent of DNA polymerase III delta subunit (HolA). This is Protein jhp_1168 from Helicobacter pylori (strain J99 / ATCC 700824) (Campylobacter pylori J99).